The sequence spans 123 residues: Large ribosomal subunit protein uL14 (123 aa).

Belongs to the universal ribosomal protein uL14 family. In terms of assembly, part of the 50S ribosomal subunit. Forms a cluster with proteins L3 and L19. In the 70S ribosome, L14 and L19 interact and together make contacts with the 16S rRNA in bridges B5 and B8.

Functionally, binds to 23S rRNA. Forms part of two intersubunit bridges in the 70S ribosome. The chain is Large ribosomal subunit protein uL14 from Pectobacterium atrosepticum (strain SCRI 1043 / ATCC BAA-672) (Erwinia carotovora subsp. atroseptica).